We begin with the raw amino-acid sequence, 372 residues long: 4-hydroxy-3-methylbut-2-en-1-yl diphosphate synthase (flavodoxin) (372 aa).

Positions 270, 273, 305, and 312 each coordinate [4Fe-4S] cluster.

It belongs to the IspG family. The cofactor is [4Fe-4S] cluster.

It carries out the reaction (2E)-4-hydroxy-3-methylbut-2-enyl diphosphate + oxidized [flavodoxin] + H2O + 2 H(+) = 2-C-methyl-D-erythritol 2,4-cyclic diphosphate + reduced [flavodoxin]. Its pathway is isoprenoid biosynthesis; isopentenyl diphosphate biosynthesis via DXP pathway; isopentenyl diphosphate from 1-deoxy-D-xylulose 5-phosphate: step 5/6. Functionally, converts 2C-methyl-D-erythritol 2,4-cyclodiphosphate (ME-2,4cPP) into 1-hydroxy-2-methyl-2-(E)-butenyl 4-diphosphate. The protein is 4-hydroxy-3-methylbut-2-en-1-yl diphosphate synthase (flavodoxin) of Pseudoalteromonas translucida (strain TAC 125).